Here is a 432-residue protein sequence, read N- to C-terminus: 3-phosphoshikimate 1-carboxyvinyltransferase (432 aa).

Residues K23, S24, and R28 each contribute to the 3-phosphoshikimate site. K23 is a binding site for phosphoenolpyruvate. Positions 95 and 123 each coordinate phosphoenolpyruvate. Residues S167, Q169, D317, and K344 each contribute to the 3-phosphoshikimate site. Q169 is a phosphoenolpyruvate binding site. D317 (proton acceptor) is an active-site residue. Phosphoenolpyruvate contacts are provided by R348 and R390.

Belongs to the EPSP synthase family. In terms of assembly, monomer.

The protein resides in the cytoplasm. The catalysed reaction is 3-phosphoshikimate + phosphoenolpyruvate = 5-O-(1-carboxyvinyl)-3-phosphoshikimate + phosphate. It participates in metabolic intermediate biosynthesis; chorismate biosynthesis; chorismate from D-erythrose 4-phosphate and phosphoenolpyruvate: step 6/7. In terms of biological role, catalyzes the transfer of the enolpyruvyl moiety of phosphoenolpyruvate (PEP) to the 5-hydroxyl of shikimate-3-phosphate (S3P) to produce enolpyruvyl shikimate-3-phosphate and inorganic phosphate. In Staphylococcus haemolyticus (strain JCSC1435), this protein is 3-phosphoshikimate 1-carboxyvinyltransferase.